A 274-amino-acid chain; its full sequence is SWI/SNF chromatin-remodeling complex subunit snf30 (274 aa).

Composition is skewed to polar residues over residues 123 to 150 (TLSYPPSNGDSSSYANGTDLHGNTGTMQ) and 157 to 167 (PSLTRSDSVSS). Positions 123–167 (TLSYPPSNGDSSSYANGTDLHGNTGTMQQEEKANPSLTRSDSVSS) are disordered.

Component of the SWI/SNF global transcription activator complex composed of at least arp9, arp42, snf5, snf22, snf30, sbf59, sol1, ssr1, ssr2, ssr3, ssr4 and tfg3.

The protein localises to the cytoplasm. The protein resides in the nucleus. Functionally, component of the SWI/SNF complex, an ATP-dependent chromatin remodeling complex, required for the positive and negative regulation of gene expression of a large number of genes. It changes chromatin structure by altering DNA-histone contacts within a nucleosome, leading eventually to a change in nucleosome position, thus facilitating or repressing binding of gene-specific transcription factors. In Schizosaccharomyces pombe (strain 972 / ATCC 24843) (Fission yeast), this protein is SWI/SNF chromatin-remodeling complex subunit snf30 (snf30).